We begin with the raw amino-acid sequence, 240 residues long: Thiopurine S-methyltransferase (240 aa).

An S-adenosyl-L-methionine-binding site is contributed by 24 to 35 (WKEKWVTRHISF). Position 34 is a phosphoserine (Ser-34). Phe-35 provides a ligand contact to substrate. At Lys-53 the chain carries N6-acetyllysine. S-adenosyl-L-methionine-binding positions include Leu-64, Glu-85, 129–130 (SI), and Arg-147.

It belongs to the class I-like SAM-binding methyltransferase superfamily. TPMT family. In terms of assembly, monomer.

Its subcellular location is the cytoplasm. The catalysed reaction is S-adenosyl-L-methionine + a thiopurine = S-adenosyl-L-homocysteine + a thiopurine S-methylether.. It carries out the reaction mercaptopurine + S-adenosyl-L-methionine = 6-methylthiopurine + S-adenosyl-L-homocysteine + H(+). Catalyzes the S-methylation of thiopurine drugs such as 6-mercaptopurine (also called mercaptopurine, 6-MP or its brand name Purinethol) using S-adenosyl-L-methionine as the methyl donor. TPMT activity modulates the cytotoxic effects of thiopurine prodrugs. A natural substrate for this enzyme has yet to be identified. The polypeptide is Thiopurine S-methyltransferase (Tpmt) (Mus musculus (Mouse)).